The primary structure comprises 395 residues: S-adenosylmethionine synthase (395 aa).

Position 16 (H16) interacts with ATP. D18 lines the Mg(2+) pocket. E44 provides a ligand contact to K(+). L-methionine-binding residues include E57 and Q100. The segment at 100 to 110 (QSPDIAQGVDR) is flexible loop. Residues 167–169 (DAK), 233–234 (RF), D242, 248–249 (RK), A265, and K269 each bind ATP. Residue D242 participates in L-methionine binding. Residue K273 coordinates L-methionine.

It belongs to the AdoMet synthase family. Homotetramer; dimer of dimers. The cofactor is Mg(2+). K(+) serves as cofactor.

It localises to the cytoplasm. It catalyses the reaction L-methionine + ATP + H2O = S-adenosyl-L-methionine + phosphate + diphosphate. The protein operates within amino-acid biosynthesis; S-adenosyl-L-methionine biosynthesis; S-adenosyl-L-methionine from L-methionine: step 1/1. In terms of biological role, catalyzes the formation of S-adenosylmethionine (AdoMet) from methionine and ATP. The overall synthetic reaction is composed of two sequential steps, AdoMet formation and the subsequent tripolyphosphate hydrolysis which occurs prior to release of AdoMet from the enzyme. This chain is S-adenosylmethionine synthase, found in Burkholderia thailandensis (strain ATCC 700388 / DSM 13276 / CCUG 48851 / CIP 106301 / E264).